The following is a 418-amino-acid chain: Hydroxysteroid dehydrogenase-like protein 2 (418 aa).

NADP(+) is bound by residues 17–23 (GASRGIG), lysine 42, and aspartate 74. Lysine 42 carries the post-translational modification N6-(2-hydroxyisobutyryl)lysine. At lysine 116 the chain carries N6-acetyllysine. The active-site Proton acceptor is the tyrosine 168. Lysine 172 contacts NADP(+). Residues 287 to 310 (STGAVPEFKEEKPQPQPKPRSGAV) form a disordered region. The 110-residue stretch at 306–415 (RSGAVEETFR…KLEKLMNQMN (110 aa)) folds into the SCP2 domain. Lysine 318 bears the N6-succinyllysine mark.

The protein belongs to the short-chain dehydrogenases/reductases (SDR) family.

It localises to the peroxisome. The protein resides in the mitochondrion. Has apparently no steroid dehydrogenase activity. Controls bile acid (BA) and lipid metabolism in response to nutritional cues. This chain is Hydroxysteroid dehydrogenase-like protein 2 (HSDL2), found in Pongo abelii (Sumatran orangutan).